The following is a 45-amino-acid chain: uncharacterized protein (45 aa).

This is an uncharacterized protein from Lolium latent virus (isolate Lolium/USA/US1/-) (LoLV).